The sequence spans 242 residues: Zinc import ATP-binding protein ZnuC (242 aa).

The 218-residue stretch at 24 to 241 folds into the ABC transporter domain; that stretch reads INVKDLSFAY…EKFLKMFSSY (218 aa). 56-63 provides a ligand contact to ATP; sequence GPNGGGKT.

This sequence belongs to the ABC transporter superfamily. Zinc importer (TC 3.A.1.15.5) family. In terms of assembly, the complex is composed of two ATP-binding proteins (ZnuC), two transmembrane proteins (ZnuB) and a solute-binding protein (ZnuA).

It localises to the cell inner membrane. The enzyme catalyses Zn(2+)(out) + ATP(in) + H2O(in) = Zn(2+)(in) + ADP(in) + phosphate(in) + H(+)(in). Functionally, part of the ABC transporter complex ZnuABC involved in zinc import. Responsible for energy coupling to the transport system. The chain is Zinc import ATP-binding protein ZnuC from Ehrlichia ruminantium (strain Gardel).